Consider the following 60-residue polypeptide: Large ribosomal subunit protein uL30 (60 aa).

Belongs to the universal ribosomal protein uL30 family. As to quaternary structure, part of the 50S ribosomal subunit.

The polypeptide is Large ribosomal subunit protein uL30 (Streptococcus uberis (strain ATCC BAA-854 / 0140J)).